A 24-amino-acid chain; its full sequence is Waglerin-4 (24 aa).

Cys-11 and Cys-15 are disulfide-bonded.

The protein belongs to the waglerin family. Monomer. As to expression, expressed by the venom gland.

The protein resides in the secreted. Waglerin-2 selectively blocks the epsilon subunit of muscle nicotinic acetylcholine receptor (nAChR). Also has effects on rodent ionotropic GABA(A) receptors (GABR), since it potentiates I(GABA) in some neurons and depresses I(GABA) in others. In mice, it elicits tachypnea, ocular proptosis, rapid collapse and spasms, whereas no toxic effects on respiration and blood pressure are observed in rats. Functionally, waglerin-4 selectively blocks the epsilon subunit of muscle nicotinic acetylcholine receptor. It elicits tachypnea, ocular proptosis, rapid collapse and spasms in mice. It causes death by respiratory failure. This is Waglerin-4 from Tropidolaemus wagleri (Wagler's pit viper).